The chain runs to 391 residues: MANWRKYIPEGTKDILFQECKKKVQVENILREIYINSGFLEVKSPTLEFYDVFNIENSTLPQEKIYKLIDGQGRILALRADMTTPIARIVGTKLRDAVYPLRLCYTSNVYRVNESLNGKNSEITQSGVEVIGIKDINADAEVIIMGIKSLLNCGLENFKIEIGHAEMFKALVEDANLDYEEKEKLRESIDTKNFTALNEILHENKGKFEKSSLNVLKELPKLFGGIEIIEKASCLTCNKRAIKALEDVRKVYEIVESIGLGEYLSVDLGMVYHIDYYTGIIFRGYTQGFGGNILSGGRYDNLIAQFGENKPATGFAIDVDGIIKSLETNGNFSDKNDEKVLVYYNKQNFKEAYERAQSLREKGIVAEITHFDEEKEAREYAHSKNMKFLKI.

The protein belongs to the class-II aminoacyl-tRNA synthetase family. HisZ subfamily. In terms of assembly, heteromultimer composed of HisG and HisZ subunits.

Its subcellular location is the cytoplasm. The protein operates within amino-acid biosynthesis; L-histidine biosynthesis; L-histidine from 5-phospho-alpha-D-ribose 1-diphosphate: step 1/9. Its function is as follows. Required for the first step of histidine biosynthesis. May allow the feedback regulation of ATP phosphoribosyltransferase activity by histidine. This chain is ATP phosphoribosyltransferase regulatory subunit, found in Clostridium kluyveri (strain ATCC 8527 / DSM 555 / NBRC 12016 / NCIMB 10680 / K1).